Consider the following 307-residue polypeptide: Heme A synthase (307 aa).

Residues 1-8 are Cytoplasmic-facing; that stretch reads MQHNRYLK. A helical membrane pass occupies residues 9–29; it reads WFAVAATVGMLLILLGGALVT. The Extracellular portion of the chain corresponds to 30 to 56; that stretch reads KTDSGLGCGRNWPDCNGSLIPKEITPE. Cys37 and Cys44 are oxidised to a cystine. The chain crosses the membrane as a helical span at residues 57-77; that stretch reads VLIEFSHRLVTGVVSISILVL. Glu60 is an active-site residue. His63 is a heme o binding site. The Cytoplasmic portion of the chain corresponds to 78-92; it reads TVWTWRKLGHIREVK. A helical transmembrane segment spans residues 93 to 113; the sequence is LLGFLAMFFLIAQALIGAAQV. The Extracellular portion of the chain corresponds to 114 to 123; it reads LWGQGDFILA. A helical membrane pass occupies residues 124–144; that stretch reads LHFGISLISFAAVLLLSMIVF. Heme o is bound at residue His125. The Cytoplasmic portion of the chain corresponds to 145–161; that stretch reads EVDRKFDADNVFIGKKL. The chain crosses the membrane as a helical span at residues 162-182; it reads RWHTIAVTIYSYLVVYTGALV. Over 183 to 218 the chain is Extracellular; sequence RHTDSSLICPDWPFCYNETPLASPNNMYEWVQMGHR. Cys191 and Cys197 form a disulfide bridge. Heme b is bound at residue His217. The helical transmembrane segment at 219–239 threads the bilayer; the sequence is LAVLIIFIWIAYITWHAVKEY. The Cytoplasmic portion of the chain corresponds to 240–247; the sequence is KNQRVVYY. The helical transmembrane segment at 248–268 threads the bilayer; sequence GWIIAFTIVFLQVIAGMLVVL. Over 269–276 the chain is Extracellular; the sequence is TKLNLTVA. A helical membrane pass occupies residues 277 to 297; that stretch reads LMHSLLISLLFGLLCYMIMLV. A heme b-binding site is contributed by His279. Over 298–307 the chain is Cytoplasmic; sequence ARSNYNEKMK.

This sequence belongs to the COX15/CtaA family. Type 1 subfamily. Interacts with CtaB. Heme b is required as a cofactor.

The protein resides in the cell membrane. The enzyme catalyses Fe(II)-heme o + 2 A + H2O = Fe(II)-heme a + 2 AH2. Its pathway is porphyrin-containing compound metabolism; heme A biosynthesis; heme A from heme O: step 1/1. Catalyzes the conversion of heme O to heme A by two successive hydroxylations of the methyl group at C8. The first hydroxylation forms heme I, the second hydroxylation results in an unstable dihydroxymethyl group, which spontaneously dehydrates, resulting in the formyl group of heme A. In Lysinibacillus sphaericus (strain C3-41), this protein is Heme A synthase.